A 402-amino-acid polypeptide reads, in one-letter code: Arginine deiminase (402 aa).

The Amidino-cysteine intermediate role is filled by cysteine 392.

This sequence belongs to the arginine deiminase family.

The protein resides in the cytoplasm. It catalyses the reaction L-arginine + H2O = L-citrulline + NH4(+). Its pathway is amino-acid degradation; L-arginine degradation via ADI pathway; carbamoyl phosphate from L-arginine: step 1/2. This chain is Arginine deiminase, found in Mycobacterium avium (strain 104).